The following is a 266-amino-acid chain: Thymidylate synthase (266 aa).

R24 contributes to the dUMP binding site. H54 is a binding site for (6R)-5,10-methylene-5,6,7,8-tetrahydrofolate. R129–R130 contacts dUMP. Residue C149 is the Nucleophile of the active site. Residues R169–D172, N180, and H210–Y212 each bind dUMP. D172 contacts (6R)-5,10-methylene-5,6,7,8-tetrahydrofolate. (6R)-5,10-methylene-5,6,7,8-tetrahydrofolate is bound at residue A265.

This sequence belongs to the thymidylate synthase family. Bacterial-type ThyA subfamily. Homodimer.

The protein resides in the cytoplasm. It catalyses the reaction dUMP + (6R)-5,10-methylene-5,6,7,8-tetrahydrofolate = 7,8-dihydrofolate + dTMP. Its pathway is pyrimidine metabolism; dTTP biosynthesis. In terms of biological role, catalyzes the reductive methylation of 2'-deoxyuridine-5'-monophosphate (dUMP) to 2'-deoxythymidine-5'-monophosphate (dTMP) while utilizing 5,10-methylenetetrahydrofolate (mTHF) as the methyl donor and reductant in the reaction, yielding dihydrofolate (DHF) as a by-product. This enzymatic reaction provides an intracellular de novo source of dTMP, an essential precursor for DNA biosynthesis. In Mycobacterium bovis (strain ATCC BAA-935 / AF2122/97), this protein is Thymidylate synthase.